Reading from the N-terminus, the 37-residue chain is ACKDGFPTATCQHAKLVGNCKNSQKYRANCAKTCGPC.

In terms of domain architecture, ShKT spans 2–37 (CKDGFPTATCQHAKLVGNCKNSQKYRANCAKTCGPC). 3 cysteine pairs are disulfide-bonded: C2/C37, C11/C30, and C20/C34. The interval 25–26 (KY) is crucial for binding to potassium channels.

Belongs to the sea anemone type 1 potassium channel toxin family. Type 1b subfamily.

The protein resides in the secreted. It localises to the nematocyst. Inhibits voltage-gated potassium channels (IC(50)=14.42 nM for rKCNA1/Kv1.1, IC(50)=80.4 nM for rKCNA2/Kv1.2, IC(50)=7.76 nM for rKCNA6/Kv1.6, IC(50)=13.12 nM for hKCNA3/Kv1.3, and IC(50)=49.14 nM for insect Shaker IR). Binds the Shaker IR channels in a voltage-independent manner. The sequence is that of Kappa-actitoxin-Bcs3b from Bunodosoma caissarum (Sea anemone).